A 528-amino-acid chain; its full sequence is Tubulin-specific chaperone E (528 aa).

One can recognise a CAP-Gly domain in the interval 27-71; that stretch reads GLVPPVAGLWLGVEWDNPERGKHDGSHEGTVYFKCRHPTAGSFIR. 7 LRR repeats span residues 152 to 176, 178 to 206, 207 to 229, 231 to 253, 254 to 274, 279 to 300, and 309 to 330; these read CPNI…DIAD, LKHL…TFPT, LKVL…ASGW, VLEK…DVLQ, TVKL…LFLI, RLEQ…DAGI, and SLQY…NELD. The LRRCT domain occupies 343 to 385; the sequence is NPLTEGSKDAQTTRQFIIARIGQLRTLNKCAIEPEERRGAELD. The residue at position 464 (K464) is an N6-acetyllysine. Residue S496 is modified to Phosphoserine.

The protein belongs to the TBCE family. Supercomplex made of cofactors A to E. Cofactors A and D function by capturing and stabilizing tubulin in a quasi-native conformation. Cofactor E binds to the cofactor D-tubulin complex; interaction with cofactor C then causes the release of tubulin polypeptides that are committed to the native state. Cofactors B and E can form a heterodimer which binds to alpha-tubulin and enhances their ability to dissociate tubulin heterodimers. Interacts with TBCD.

Its subcellular location is the cytoplasm. The protein localises to the cytoskeleton. Its function is as follows. Tubulin-folding protein; involved in the second step of the tubulin folding pathway and in the regulation of tubulin heterodimer dissociation. Required for correct organization of microtubule cytoskeleton and mitotic splindle, and maintenance of the neuronal microtubule network. This is Tubulin-specific chaperone E (TBCE) from Bos taurus (Bovine).